The primary structure comprises 304 residues: Homoserine kinase (304 aa).

90–100 lines the ATP pocket; it reads PLARGLGSSAS.

Belongs to the GHMP kinase family. Homoserine kinase subfamily.

The protein resides in the cytoplasm. The enzyme catalyses L-homoserine + ATP = O-phospho-L-homoserine + ADP + H(+). The protein operates within amino-acid biosynthesis; L-threonine biosynthesis; L-threonine from L-aspartate: step 4/5. Functionally, catalyzes the ATP-dependent phosphorylation of L-homoserine to L-homoserine phosphate. This chain is Homoserine kinase, found in Staphylococcus aureus (strain NCTC 8325 / PS 47).